Consider the following 93-residue polypeptide: Bacterial microcompartment shell protein PduA (93 aa).

One can recognise a BMC domain in the interval A5 to P89.

This sequence belongs to the bacterial microcompartments protein family. Homohexamer with a central pore; Lys-26 and Arg-79 interactions are very important for hexamer symmetry. The hexamers pack against each other in arrays. Interacts individually with shell proteins PduB, PduB', PduJ, PduK, PduN and PduU. Modeling suggests PduC, PduD, PduE, PduL and PduP interact with a cleft formed by the C-terminal segments of 2 adjacent PduA subunits (on the BMC luminal side) in the hexamer.

Its subcellular location is the bacterial microcompartment. Its pathway is polyol metabolism; 1,2-propanediol degradation. One of the major shell proteins of the bacterial microcompartment (BMC) dedicated to 1,2-propanediol (1,2-PD) degradation, probably important for metabolite diffusion into and out of the BMC. Overexpression of a C-terminally mutated form (PduA*) makes thin parallel filaments with a honeycomb-like assembly in cross-section that probably form nanotubes. The filaments interfere with septation. PduA is probably the hub for binding multiple enzymes to the interior of the BMC. At least one of PduA or PduJ is required for BMC assembly; it must be encoded as the first gene in the pdu operon. Functionally, expression of a cosmid containing the full 21-gene pdu operon in E.coli allows E.coli to grow on 1,2-PD with the appearance of BMCs in its cytoplasm. Overexpression of this protein leads to aberrant intracellular filaments. In terms of biological role, the 1,2-PD-specific bacterial microcompartment (BMC) concentrates low levels of 1,2-PD catabolic enzymes, concentrates volatile reaction intermediates thus enhancing pathway flux and keeps the level of toxic, mutagenic propionaldehyde low. The protein is Bacterial microcompartment shell protein PduA of Citrobacter freundii.